Here is a 276-residue protein sequence, read N- to C-terminus: NH(3)-dependent NAD(+) synthetase (276 aa).

Residue 43 to 50 coordinates ATP; the sequence is GISGGVDS. Asp49 is a binding site for Mg(2+). Residue Arg146 coordinates deamido-NAD(+). Thr166 is an ATP binding site. Residue Glu171 participates in Mg(2+) binding. Residues Lys179 and Asp186 each contribute to the deamido-NAD(+) site. ATP is bound by residues Lys195 and Thr217. Residue 266–267 coordinates deamido-NAD(+); the sequence is HK.

It belongs to the NAD synthetase family. In terms of assembly, homodimer.

The catalysed reaction is deamido-NAD(+) + NH4(+) + ATP = AMP + diphosphate + NAD(+) + H(+). It participates in cofactor biosynthesis; NAD(+) biosynthesis; NAD(+) from deamido-NAD(+) (ammonia route): step 1/1. Catalyzes the ATP-dependent amidation of deamido-NAD to form NAD. Uses ammonia as a nitrogen source. The polypeptide is NH(3)-dependent NAD(+) synthetase (Shewanella piezotolerans (strain WP3 / JCM 13877)).